The primary structure comprises 226 residues: MALSDVDVKKQIKHMMAFIEQEANEKAEEIDAKAEEEFNIEKGRLVQTQRLKIMEYYEKKEKQIEQQKKILMSTMRNQARLKVLRARNDLISDLLSEAKLRLSRIVEDPEVYQGLLDKLVLQGLLRLLEPVMIVRCRPQDLLLVEAAVQKAIPEYMTISQKHVEVQIDKEAYLAVNAAGGVEVYSGNQRIKVSNTLESRLDLSAKQKMPEIRMALFGANTNRKFFI.

The protein belongs to the V-ATPase E subunit family. V-ATPase is a heteromultimeric enzyme made up of two complexes: the ATP-hydrolytic V1 complex and the proton translocation V0 complex. The V1 complex consists of three catalytic AB heterodimers that form a heterohexamer, three peripheral stalks each consisting of EG heterodimers, one central rotor including subunits D and F, and the regulatory subunits C and H. The proton translocation complex V0 consists of the proton transport subunit a, a ring of proteolipid subunits c9c'', rotary subunit d, subunits e and f, and the accessory subunits ATP6AP1/Ac45 and ATP6AP2/PRR. In terms of tissue distribution, testis specific.

Its function is as follows. Subunit of the V1 complex of vacuolar(H+)-ATPase (V-ATPase), a multisubunit enzyme composed of a peripheral complex (V1) that hydrolyzes ATP and a membrane integral complex (V0) that translocates protons. V-ATPase is responsible for acidifying and maintaining the pH of intracellular compartments and in some cell types, is targeted to the plasma membrane, where it is responsible for acidifying the extracellular environment. The chain is V-type proton ATPase subunit E 2 (ATP6V1E2) from Homo sapiens (Human).